The chain runs to 611 residues: MAGPEPEPVSSAAATTPAPSAPVVLPKTSESDQLLKIRHSMSHVMAMAVQQLFPKARVTIGPWTETGFYYDFDNPDPFTEADLKAIKKGMIKIINKKLPLQRVEVSRNEAEEKIKAQNEPYKLEILQGLHEPITLYTLGEDWWDLCAGPHVDHTGQLNAKAFELESLAGAYWRGDETKAQLQRIYGTAWESPEQLAEHKRRKEEALRRDHRRIGKDLDLFSIEDEAGAGLVFWHPRGARIRLLIEEFWRQAHFEGGYELLYTPHVADISLWKTSGHLDFYAESMFGPMEVDEREYQLKPMNCPFHVLTYASKLRSYRELPIRWAELGTVYRYERPGVMHGLMRVRGFTQDDAHVFCLPEQISDEILKILDLTERILSAFDFSNYEINLSTRPEKSIGEDAVWDLATKGLIEALERKGWAYKIDEGGGAFYGPKIDLKIEDAIGRMWQCSTIQLDFNLPERFELDYIAADGSKQRPIMIHRAIFGSLERFFGIMTENYAGDYPFWLAPEQVRLLPVTDEVQPYAEQLLDQLTKAGVRATVDRSGDRLGKLIRTGEQMKIPVLAVIGAKEAEQNAVSLRSRRDGDLGVTAVSDLLSAAQMANSERAAGLELNR.

Positions 1 to 27 (MAGPEPEPVSSAAATTPAPSAPVVLPK) are disordered. A compositionally biased stretch (low complexity) spans 8–24 (PVSSAAATTPAPSAPVV). The catalytic stretch occupies residues 209–502 (DHRRIGKDLD…MTENYAGDYP (294 aa)). Residues cysteine 302, histidine 353, and histidine 479 each contribute to the Zn(2+) site.

This sequence belongs to the class-II aminoacyl-tRNA synthetase family. As to quaternary structure, homodimer. It depends on Zn(2+) as a cofactor.

Its subcellular location is the cytoplasm. The catalysed reaction is tRNA(Thr) + L-threonine + ATP = L-threonyl-tRNA(Thr) + AMP + diphosphate + H(+). Functionally, catalyzes the attachment of threonine to tRNA(Thr) in a two-step reaction: L-threonine is first activated by ATP to form Thr-AMP and then transferred to the acceptor end of tRNA(Thr). Also edits incorrectly charged L-seryl-tRNA(Thr). This Synechococcus sp. (strain CC9605) protein is Threonine--tRNA ligase.